Here is a 113-residue protein sequence, read N- to C-terminus: Cell division protein FtsB (113 aa).

Topologically, residues 1-3 (MRL) are cytoplasmic. Residues 4-21 (ISLLLFVLLLAIQYPLWL) traverse the membrane as a helical segment. Over 22-113 (GKGGWLRVWD…PNSVAGRGGH (92 aa)) the chain is Periplasmic. Residues 34 to 64 (RQVNEQTVHNQALKLRNAKLEGEVKDLQDGT) adopt a coiled-coil conformation. Residues 93–113 (KVSATPPLPPPPNSVAGRGGH) are disordered.

This sequence belongs to the FtsB family. As to quaternary structure, part of a complex composed of FtsB, FtsL and FtsQ.

It localises to the cell inner membrane. In terms of biological role, essential cell division protein. May link together the upstream cell division proteins, which are predominantly cytoplasmic, with the downstream cell division proteins, which are predominantly periplasmic. This Cupriavidus metallidurans (strain ATCC 43123 / DSM 2839 / NBRC 102507 / CH34) (Ralstonia metallidurans) protein is Cell division protein FtsB.